The chain runs to 90 residues: Bombyxin B-12 (90 aa).

The first 20 residues, 1 to 20 (MMKTTIMFMLVVVISLTYSS), serve as a signal peptide directing secretion. Disulfide bonds link Cys-30/Cys-76, Cys-42/Cys-89, and Cys-75/Cys-80. Positions 49-67 (SGAQYAPYFWTRQYLGSRG) are cleaved as a propeptide — c peptide like.

The protein belongs to the insulin family. As to quaternary structure, heterodimer of a B chain and an A chain linked by two disulfide bonds.

It is found in the secreted. In terms of biological role, brain peptide responsible for activation of prothoracic glands to produce ecdysone in insects. This is Bombyxin B-12 (BBXB12) from Bombyx mori (Silk moth).